The sequence spans 392 residues: Probable tRNA sulfurtransferase (392 aa).

A THUMP domain is found at Ser59–Glu166. ATP is bound by residues Leu186–Leu187, Tyr211–Phe212, Arg269, Gly290, and Gln299.

The protein belongs to the ThiI family.

Its subcellular location is the cytoplasm. The enzyme catalyses [ThiI sulfur-carrier protein]-S-sulfanyl-L-cysteine + a uridine in tRNA + 2 reduced [2Fe-2S]-[ferredoxin] + ATP + H(+) = [ThiI sulfur-carrier protein]-L-cysteine + a 4-thiouridine in tRNA + 2 oxidized [2Fe-2S]-[ferredoxin] + AMP + diphosphate. It catalyses the reaction [ThiS sulfur-carrier protein]-C-terminal Gly-Gly-AMP + S-sulfanyl-L-cysteinyl-[cysteine desulfurase] + AH2 = [ThiS sulfur-carrier protein]-C-terminal-Gly-aminoethanethioate + L-cysteinyl-[cysteine desulfurase] + A + AMP + 2 H(+). The protein operates within cofactor biosynthesis; thiamine diphosphate biosynthesis. Catalyzes the ATP-dependent transfer of a sulfur to tRNA to produce 4-thiouridine in position 8 of tRNAs, which functions as a near-UV photosensor. Also catalyzes the transfer of sulfur to the sulfur carrier protein ThiS, forming ThiS-thiocarboxylate. This is a step in the synthesis of thiazole, in the thiamine biosynthesis pathway. The sulfur is donated as persulfide by IscS. This Coxiella burnetii (strain RSA 493 / Nine Mile phase I) protein is Probable tRNA sulfurtransferase.